The sequence spans 331 residues: DNA-directed RNA polymerase subunit alpha (331 aa).

The alpha N-terminal domain (alpha-NTD) stretch occupies residues 1-230 (MKNIKTSPYI…KQMSVFNSEW (230 aa)). Residues 247–331 (LKPLLQKIEA…ALQKRLNKLK (85 aa)) form an alpha C-terminal domain (alpha-CTD) region.

It belongs to the RNA polymerase alpha chain family. As to quaternary structure, homodimer. The RNAP catalytic core consists of 2 alpha, 1 beta/beta' and 1 omega subunit. When a sigma factor is associated with the core the holoenzyme is formed, which can initiate transcription.

The enzyme catalyses RNA(n) + a ribonucleoside 5'-triphosphate = RNA(n+1) + diphosphate. DNA-dependent RNA polymerase catalyzes the transcription of DNA into RNA using the four ribonucleoside triphosphates as substrates. This chain is DNA-directed RNA polymerase subunit alpha, found in Wolinella succinogenes (strain ATCC 29543 / DSM 1740 / CCUG 13145 / JCM 31913 / LMG 7466 / NCTC 11488 / FDC 602W) (Vibrio succinogenes).